Consider the following 176-residue polypeptide: Peptidoglycan-associated lipoprotein (176 aa).

The N-terminal stretch at 1–32 (MSRIDTPAASRMQTIARNPVMIALVMTLALAG) is a signal peptide. Residue Cys33 is the site of N-palmitoyl cysteine attachment. Residue Cys33 is the site of S-diacylglycerol cysteine attachment. In terms of domain architecture, OmpA-like spans 58 to 175 (QQDFTVNVGD…RAVTVLGGAG (118 aa)).

This sequence belongs to the Pal lipoprotein family. The Tol-Pal system is composed of five core proteins: the inner membrane proteins TolA, TolQ and TolR, the periplasmic protein TolB and the outer membrane protein Pal. They form a network linking the inner and outer membranes and the peptidoglycan layer.

The protein localises to the cell outer membrane. Functionally, part of the Tol-Pal system, which plays a role in outer membrane invagination during cell division and is important for maintaining outer membrane integrity. The chain is Peptidoglycan-associated lipoprotein from Rhizobium meliloti (strain 1021) (Ensifer meliloti).